The following is a 333-amino-acid chain: Phosphate acyltransferase (333 aa).

It belongs to the PlsX family. In terms of assembly, homodimer. Probably interacts with PlsY.

It localises to the cytoplasm. It catalyses the reaction a fatty acyl-[ACP] + phosphate = an acyl phosphate + holo-[ACP]. Its pathway is lipid metabolism; phospholipid metabolism. Catalyzes the reversible formation of acyl-phosphate (acyl-PO(4)) from acyl-[acyl-carrier-protein] (acyl-ACP). This enzyme utilizes acyl-ACP as fatty acyl donor, but not acyl-CoA. The polypeptide is Phosphate acyltransferase (Cellvibrio japonicus (strain Ueda107) (Pseudomonas fluorescens subsp. cellulosa)).